The chain runs to 111 residues: PCNA-associated factor (111 aa).

Positions 1–10 (MVRTKANSVP) are enriched in polar residues. The segment at 1-111 (MVRTKANSVP…PPDHTDDEKE (111 aa)) is disordered. Serine 8 carries the post-translational modification Phosphoserine. Residue lysine 15 forms a Glycyl lysine isopeptide (Lys-Gly) (interchain with G-Cter in ubiquitin) linkage. The D-box motif lies at 23 to 34 (RKVLGSSTSAAN). An N6-acetyllysine; alternate modification is found at lysine 24. Residue lysine 24 forms a Glycyl lysine isopeptide (Lys-Gly) (interchain with G-Cter in ubiquitin); alternate linkage. A compositionally biased stretch (polar residues) spans 27 to 39 (GSSTSAANSTPLS). Phosphoserine is present on residues serine 28, serine 31, and serine 72. A PIP-box motif is present at residues 62 to 72 (QKGIGEFFSLS). A compositionally biased stretch (basic and acidic residues) spans 74-84 (KDSEKENRIPE). A KEN box motif is present at residues 78–80 (KEN). The Initiation motif motif lies at 85–97 (EAGSSGLGKAKRK).

In terms of assembly, interacts (when monoubiquitinated at Lys-15 and Lys-24) with PCNA. Interacts with isoform 2/p33ING1b of ING1. Interacts with BRCA1. Post-translationally, monoubiquitinated at Lys-15 and Lys-24 during normal S phase, promoting its association with PCNA. Also diubiquitinated at these 2 sites. Following DNA damage, monoubiquitin chains at Lys-15 and Lys-24 are probably extended, leading to disrupt the interaction with PCNA. Polyubiquitinated by the APC/C complex at the mitotic exit, leading to its degradation by the proteasome.

The protein localises to the nucleus. It localises to the cytoplasm. It is found in the perinuclear region. Its function is as follows. PCNA-binding protein that acts as a regulator of DNA repair during DNA replication. Following DNA damage, the interaction with PCNA is disrupted, facilitating the interaction between monoubiquitinated PCNA and the translesion DNA synthesis DNA polymerase eta (POLH) at stalled replisomes, facilitating the bypass of replication-fork-blocking lesions. Also acts as a regulator of centrosome number. In Bos taurus (Bovine), this protein is PCNA-associated factor.